We begin with the raw amino-acid sequence, 365 residues long: Putative fatty acid elongase 2 (365 aa).

Residues 1–68 (MPDSPTLHHN…SFEFIVNKTR (68 aa)) are Lumenal-facing. N-linked (GlcNAc...) asparagine glycosylation is found at N17 and N65. The chain crosses the membrane as a helical span at residues 69 to 89 (FSSAPVVATIIISYYLLILVG). Residues 90 to 111 (GRIMRNRQPIRLQKIFQYYNLT) are Cytoplasmic-facing. A helical membrane pass occupies residues 112–132 (FSIASAILALLIFEQVAPAIY). The Lumenal segment spans residues 133–149 (KHGFFFSICNEKAWTQP). A helical membrane pass occupies residues 150-170 (LVFLYYCAYISKFLELTDTFF). Over 171–179 (LVLRKKPLQ) the chain is Cytoplasmic. Residues 180 to 198 (FLHCYHHGATAVLVYTQIV) form a helical membrane-spanning segment. Over 199-204 (GRTSIS) the chain is Lumenal. A helical membrane pass occupies residues 205–225 (WLIIEINLLVHVTMYYYYYLV). Topologically, residues 226–241 (AKGIRVPWKKWVTRFQ) are cytoplasmic. The chain crosses the membrane as a helical span at residues 242-262 (IVQFFADLGFIYFAVYTEVAY). Residues 263–278 (RLKFYKACMGHCSGHP) are Lumenal-facing. Residues 279–299 (LAAFCGLATISSYLVLFIVFY) traverse the membrane as a helical segment. The Cytoplasmic portion of the chain corresponds to 300-365 (HNTYKKNAAL…PISSGLNNEK (66 aa)).

The protein belongs to the ELO family.

Its subcellular location is the endoplasmic reticulum membrane. The catalysed reaction is a very-long-chain acyl-CoA + malonyl-CoA + H(+) = a very-long-chain 3-oxoacyl-CoA + CO2 + CoA. Functionally, may be involved in the synthesis of very long chain fatty acids. This is Putative fatty acid elongase 2 from Schizosaccharomyces pombe (strain 972 / ATCC 24843) (Fission yeast).